Here is a 119-residue protein sequence, read N- to C-terminus: UPF0292 protein TV1259 (119 aa).

One can recognise a Toprim domain in the interval 11 to 93 (SIPIIVEGRN…YVDLYLWNFI (83 aa)). Mg(2+) contacts are provided by Glu17, Asp62, and Asp64.

The protein belongs to the UPF0292 family. Requires Mg(2+) as cofactor.

The sequence is that of UPF0292 protein TV1259 from Thermoplasma volcanium (strain ATCC 51530 / DSM 4299 / JCM 9571 / NBRC 15438 / GSS1).